Reading from the N-terminus, the 363-residue chain is UDP-3-O-acylglucosamine N-acyltransferase (363 aa).

His-259 acts as the Proton acceptor in catalysis.

Belongs to the transferase hexapeptide repeat family. LpxD subfamily. Homotrimer.

The catalysed reaction is a UDP-3-O-[(3R)-3-hydroxyacyl]-alpha-D-glucosamine + a (3R)-hydroxyacyl-[ACP] = a UDP-2-N,3-O-bis[(3R)-3-hydroxyacyl]-alpha-D-glucosamine + holo-[ACP] + H(+). It functions in the pathway bacterial outer membrane biogenesis; LPS lipid A biosynthesis. Catalyzes the N-acylation of UDP-3-O-acylglucosamine using 3-hydroxyacyl-ACP as the acyl donor. Is involved in the biosynthesis of lipid A, a phosphorylated glycolipid that anchors the lipopolysaccharide to the outer membrane of the cell. This is UDP-3-O-acylglucosamine N-acyltransferase from Ruegeria pomeroyi (strain ATCC 700808 / DSM 15171 / DSS-3) (Silicibacter pomeroyi).